The sequence spans 99 residues: C-C motif chemokine 17 (99 aa).

A signal peptide spans 1–23 (MMSLKLLLLVMLLLGASLQVTHA). Cystine bridges form between Cys33-Cys57 and Cys34-Cys73.

The protein belongs to the intercrine beta (chemokine CC) family. Expressed in thymus and also in spleen, lung, lymph node, kidney, small intestine, colon and skin.

It is found in the secreted. Chemokine, which displays chemotactic activity for T lymphocytes, preferentially Th2 cells, but not monocytes or granulocytes. Therefore plays an important role in a wide range of inflammatory and immunological processes. Acts by binding to CCR4 at T-cell surface. Mediates GM-CSF/CSF2-driven pain and inflammation. In the brain, required to maintain the typical, highly branched morphology of hippocampal microglia under homeostatic conditions. May be important for the appropriate adaptation of microglial morphology and synaptic plasticity to acute lipopolysaccharide (LPS)-induced neuroinflammation. Plays a role in wound healing, mainly by inducing fibroblast migration into the wound. This Felis catus (Cat) protein is C-C motif chemokine 17 (CCL17).